We begin with the raw amino-acid sequence, 175 residues long: Archaemetzincin (175 aa).

His-125 contacts Zn(2+). The Proton acceptor role is filled by Glu-126. Zn(2+)-binding residues include His-129, His-135, Cys-136, Cys-141, Cys-160, and Cys-163.

This sequence belongs to the peptidase M54 family. As to quaternary structure, monomer. Zn(2+) serves as cofactor.

In terms of biological role, probable zinc metalloprotease whose natural substrate is unknown. Does not show endo- or exopeptidase activity against resorufin labeled casein, p-nitroanilide (pNA), amidomethylcoumarin (AMC) (one to three amino acids in length), and hippuryl-aminoacid substrates. The sequence is that of Archaemetzincin from Methanopyrus kandleri (strain AV19 / DSM 6324 / JCM 9639 / NBRC 100938).